The primary structure comprises 316 residues: Small neutral protease regulatory protein (316 aa).

One can recognise an HTH lysR-type domain in the interval 1–56; the sequence is MRHLRALCAIADTGSVRRAARELGVSQPALTTQLRRIEQSLGAELFHRGRDGCRPT. The segment at residues 16–35 is a DNA-binding region (H-T-H motif); the sequence is VRRAARELGVSQPALTTQLR.

The protein belongs to the LysR transcriptional regulatory family.

Its function is as follows. Transcriptional trans-activator of the gene (mprA) for the small neutral protease. The polypeptide is Small neutral protease regulatory protein (mprR) (Streptomyces coelicolor).